We begin with the raw amino-acid sequence, 536 residues long: Phosphoenolpyruvate carboxykinase (ATP) (536 aa).

Residues R61, Y195, and K201 each coordinate substrate. Residues K201, H220, and 236 to 244 (GLSGTGKTT) each bind ATP. Residues K201 and H220 each coordinate Mn(2+). D257 contributes to the Mn(2+) binding site. 3 residues coordinate ATP: E285, R322, and T447. A substrate-binding site is contributed by R322.

This sequence belongs to the phosphoenolpyruvate carboxykinase (ATP) family. Mn(2+) is required as a cofactor.

It is found in the cytoplasm. The enzyme catalyses oxaloacetate + ATP = phosphoenolpyruvate + ADP + CO2. The protein operates within carbohydrate biosynthesis; gluconeogenesis. Involved in the gluconeogenesis. Catalyzes the conversion of oxaloacetate (OAA) to phosphoenolpyruvate (PEP) through direct phosphoryl transfer between the nucleoside triphosphate and OAA. The chain is Phosphoenolpyruvate carboxykinase (ATP) from Allorhizobium ampelinum (strain ATCC BAA-846 / DSM 112012 / S4) (Agrobacterium vitis (strain S4)).